We begin with the raw amino-acid sequence, 44 residues long: Small ribosomal subunit protein eS31 (44 aa).

Residues Cys-18, Cys-21, Cys-35, and Cys-38 each contribute to the Zn(2+) site. A C4-type zinc finger spans residues Cys-18–Cys-38.

This sequence belongs to the eukaryotic ribosomal protein eS31 family. Part of the 30S ribosomal subunit. Requires Zn(2+) as cofactor.

This chain is Small ribosomal subunit protein eS31, found in Haloarcula marismortui (strain ATCC 43049 / DSM 3752 / JCM 8966 / VKM B-1809) (Halobacterium marismortui).